The sequence spans 905 residues: Alanine--tRNA ligase (905 aa).

Positions 569, 573, 693, and 697 each coordinate Zn(2+).

Belongs to the class-II aminoacyl-tRNA synthetase family. Zn(2+) serves as cofactor.

Its subcellular location is the cytoplasm. It catalyses the reaction tRNA(Ala) + L-alanine + ATP = L-alanyl-tRNA(Ala) + AMP + diphosphate. Functionally, catalyzes the attachment of alanine to tRNA(Ala) in a two-step reaction: alanine is first activated by ATP to form Ala-AMP and then transferred to the acceptor end of tRNA(Ala). Also edits incorrectly charged Ser-tRNA(Ala) and Gly-tRNA(Ala) via its editing domain. In Roseiflexus castenholzii (strain DSM 13941 / HLO8), this protein is Alanine--tRNA ligase.